We begin with the raw amino-acid sequence, 571 residues long: Medium/long-chain-fatty-acid--CoA ligase FadD8 (571 aa).

Positions 1–22 are disordered; the sequence is MSTAGDDAVGVPPACGGRSDAV.

Belongs to the ATP-dependent AMP-binding enzyme family.

The catalysed reaction is a medium-chain fatty acid + ATP + CoA = a medium-chain fatty acyl-CoA + AMP + diphosphate. It catalyses the reaction a long-chain fatty acid + ATP + CoA = a long-chain fatty acyl-CoA + AMP + diphosphate. The enzyme catalyses hexanoate + ATP + CoA = hexanoyl-CoA + AMP + diphosphate. It carries out the reaction dodecanoate + ATP + CoA = dodecanoyl-CoA + AMP + diphosphate. The catalysed reaction is hexadecanoate + ATP + CoA = hexadecanoyl-CoA + AMP + diphosphate. The protein operates within lipid metabolism; fatty acid metabolism. In terms of biological role, catalyzes the activation of medium/long-chain fatty acids as acyl-coenzyme A (acyl-CoA). The chain is Medium/long-chain-fatty-acid--CoA ligase FadD8 from Mycobacterium tuberculosis (strain ATCC 25618 / H37Rv).